The following is a 135-amino-acid chain: Ribonuclease P protein component (135 aa).

The segment at 115–135 (TNETVSPVSDTPLPQHERGSQ) is disordered.

The protein belongs to the RnpA family. In terms of assembly, consists of a catalytic RNA component (M1 or rnpB) and a protein subunit.

It catalyses the reaction Endonucleolytic cleavage of RNA, removing 5'-extranucleotides from tRNA precursor.. In terms of biological role, RNaseP catalyzes the removal of the 5'-leader sequence from pre-tRNA to produce the mature 5'-terminus. It can also cleave other RNA substrates such as 4.5S RNA. The protein component plays an auxiliary but essential role in vivo by binding to the 5'-leader sequence and broadening the substrate specificity of the ribozyme. The protein is Ribonuclease P protein component of Chloroflexus aurantiacus (strain ATCC 29366 / DSM 635 / J-10-fl).